Consider the following 321-residue polypeptide: Acetyl-coenzyme A carboxylase carboxyl transferase subunit alpha (321 aa).

The 262-residue stretch at 32–293 folds into the CoA carboxyltransferase C-terminal domain; sequence DISEEIARLQ…KRVLQDQLKE (262 aa).

It belongs to the AccA family. Acetyl-CoA carboxylase is a heterohexamer composed of biotin carboxyl carrier protein (AccB), biotin carboxylase (AccC) and two subunits each of ACCase subunit alpha (AccA) and ACCase subunit beta (AccD).

It is found in the cytoplasm. The enzyme catalyses N(6)-carboxybiotinyl-L-lysyl-[protein] + acetyl-CoA = N(6)-biotinyl-L-lysyl-[protein] + malonyl-CoA. The protein operates within lipid metabolism; malonyl-CoA biosynthesis; malonyl-CoA from acetyl-CoA: step 1/1. Its function is as follows. Component of the acetyl coenzyme A carboxylase (ACC) complex. First, biotin carboxylase catalyzes the carboxylation of biotin on its carrier protein (BCCP) and then the CO(2) group is transferred by the carboxyltransferase to acetyl-CoA to form malonyl-CoA. The sequence is that of Acetyl-coenzyme A carboxylase carboxyl transferase subunit alpha from Chromobacterium violaceum (strain ATCC 12472 / DSM 30191 / JCM 1249 / CCUG 213 / NBRC 12614 / NCIMB 9131 / NCTC 9757 / MK).